Here is a 185-residue protein sequence, read N- to C-terminus: Pyridoxal 5'-phosphate synthase subunit PdxT (185 aa).

46 to 48 (GES) is a binding site for L-glutamine. Cys-78 acts as the Nucleophile in catalysis. L-glutamine-binding positions include Arg-106 and 132–133 (IR). Catalysis depends on charge relay system residues His-168 and Glu-170.

Belongs to the glutaminase PdxT/SNO family. As to quaternary structure, in the presence of PdxS, forms a dodecamer of heterodimers. Only shows activity in the heterodimer.

It catalyses the reaction aldehydo-D-ribose 5-phosphate + D-glyceraldehyde 3-phosphate + L-glutamine = pyridoxal 5'-phosphate + L-glutamate + phosphate + 3 H2O + H(+). The enzyme catalyses L-glutamine + H2O = L-glutamate + NH4(+). The protein operates within cofactor biosynthesis; pyridoxal 5'-phosphate biosynthesis. Functionally, catalyzes the hydrolysis of glutamine to glutamate and ammonia as part of the biosynthesis of pyridoxal 5'-phosphate. The resulting ammonia molecule is channeled to the active site of PdxS. This Corynebacterium diphtheriae (strain ATCC 700971 / NCTC 13129 / Biotype gravis) protein is Pyridoxal 5'-phosphate synthase subunit PdxT.